Here is a 75-residue protein sequence, read N- to C-terminus: Putative membrane protein insertion efficiency factor (75 aa).

Belongs to the UPF0161 family.

The protein localises to the cell inner membrane. Its function is as follows. Could be involved in insertion of integral membrane proteins into the membrane. The sequence is that of Putative membrane protein insertion efficiency factor from Gloeothece citriformis (strain PCC 7424) (Cyanothece sp. (strain PCC 7424)).